The following is a 367-amino-acid chain: DNA replication and repair protein RecF (367 aa).

Residue 30 to 37 (GANGSGKT) participates in ATP binding.

It belongs to the RecF family.

The protein localises to the cytoplasm. Functionally, the RecF protein is involved in DNA metabolism; it is required for DNA replication and normal SOS inducibility. RecF binds preferentially to single-stranded, linear DNA. It also seems to bind ATP. This Pseudomonas putida (strain GB-1) protein is DNA replication and repair protein RecF.